Reading from the N-terminus, the 529-residue chain is Listeriolysin O (529 aa).

The N-terminal stretch at 1-24 is a signal peptide; sequence MKKIMLVFITLILVSLPIAQQTEA. The interval 35–54 is disordered; that stretch reads SISSMAPPASPPASPKTPIE. Transmembrane regions (beta stranded) follow at residues 214–227, 234–243, 312–321, and 329–341; these read ESQLIAKFGTAFKA, VNFGAISEGK, STKVKAAFDA, and SGDVELTNIIKNS. A Conserved undecapeptide motif is present at residues 483 to 493; the sequence is ECTGLAWEWWR. The Cholesterol binding signature appears at 515–516; that stretch reads TL.

It belongs to the cholesterol-dependent cytolysin family. As to quaternary structure, homooligomeric pore complex of 35 to 50 subunits; when inserted in the host membrane.

It localises to the secreted. The protein resides in the host membrane. Its subcellular location is the host cell membrane. Activity of listeriolysin O is regulated on multiple levels. It should be high in the phagosome, thereby allowing escape of the bacteria from the phagosomal compartment. Then, once inside the host cytosol, the activity must be controlled to prevent lysis of the host plasma membrane and loss of the intracellular environment. Its function is as follows. A cholesterol-dependent toxin that causes cytolysis by forming pores in cholesterol containing host membranes. After binding to target membranes, the protein undergoes a major conformation change, leading to its insertion in the host membrane and formation of an oligomeric pore complex. Cholesterol is required for binding to host membranes, membrane insertion and pore formation; cholesterol binding is mediated by a Thr-Leu pair in the C-terminus. Acts as a major virulence factor required for the escape of bacteria from phagosomal vacuoles and entry into the host cytosol. Can be reversibly inactivated by oxidation. The sequence is that of Listeriolysin O (hly) from Listeria monocytogenes serotype 1/2a (strain 08-5578).